The primary structure comprises 131 residues: POU domain, class 3, transcription factor 3 (131 aa).

The POU-specific domain occupies 1 to 60 (FTQRRMKLGFTQADVGLALGTLYGNVFSQTTICRFEALQLSFKNMCKLKPLLNKWLEEAD). A DNA-binding region (homeobox) is located at residues 78-131 (KRKKRTSIEVSVKGALESHFLKCPKPSAQEITNLADSLQLEKEVVRVWFCNNLQ).

Belongs to the POU transcription factor family. Class-3 subfamily. In terms of assembly, homodimer. In terms of tissue distribution, brain.

It localises to the nucleus. Its function is as follows. Transcription factor that acts synergistically with SOX11 and SOX4. Plays a role in neuronal development. Is implicated in an enhancer activity at the embryonic met-mesencephalic junction; the enhancer element contains the octamer motif (5'-ATTTGCAT-3'). In Sus scrofa (Pig), this protein is POU domain, class 3, transcription factor 3 (POU3F3).